The following is a 153-amino-acid chain: Putative transmembrane protein INAFM2 (153 aa).

A compositionally biased stretch (basic and acidic residues) spans 1–23; it reads MKERDAAPAERGKPATYTGDKKA. Positions 1-24 are disordered; the sequence is MKERDAAPAERGKPATYTGDKKAK. Residues 36–56 form a helical membrane-spanning segment; sequence LATVFAYVLSVSLAAIVLAVY. The segment at 66–153 is disordered; sequence AGTSGGAAGP…EETAAAPGSR (88 aa). The segment covering 79-101 has biased composition (low complexity); it reads GSNATGPSGTSGAAAAGPNTTGS. Over residues 118-131 the composition is skewed to pro residues; sequence PAPPEPPADSPPAG.

It is found in the membrane. This chain is Putative transmembrane protein INAFM2, found in Homo sapiens (Human).